Consider the following 83-residue polypeptide: Apolipoprotein C-I (83 aa).

The first 26 residues, 1–26, serve as a signal peptide directing secretion; sequence MRLFLSLPVLVVVLSIVLEGPAPAQG.

The protein belongs to the apolipoprotein C1 family. As to expression, synthesized mainly in liver and to a minor degree in intestine. Also found in the lung and spleen.

It localises to the secreted. Inhibitor of lipoprotein binding to the low density lipoprotein (LDL) receptor, LDL receptor-related protein, and very low density lipoprotein (VLDL) receptor. Associates with high density lipoproteins (HDL) and the triacylglycerol-rich lipoproteins in the plasma and makes up about 10% of the protein of the VLDL and 2% of that of HDL. Appears to interfere directly with fatty acid uptake and is also the major plasma inhibitor of cholesteryl ester transfer protein (CETP). Binds free fatty acids and reduces their intracellular esterification. Modulates the interaction of APOE with beta-migrating VLDL and inhibits binding of beta-VLDL to the LDL receptor-related protein. This is Apolipoprotein C-I (APOC1) from Homo sapiens (Human).